The sequence spans 317 residues: ADIPOR-like receptor IZH2 (317 aa).

The Cytoplasmic segment spans residues 1-78 (MSTLLERTKS…TFKSLFYLHN (78 aa)). The chain crosses the membrane as a helical span at residues 79–99 (ESVNIYSHLIPALGFFTVLLL). The Extracellular segment spans residues 100 to 110 (DKSTIKVFATT). Residues 111-131 (TWLDHMVIDLFYSGAFACLIL) form a helical membrane-spanning segment. At 132 to 153 (SSSFHCLKSHSLRIATLGNKLD) the chain is on the cytoplasmic side. The chain crosses the membrane as a helical span at residues 154–174 (YLGICILIVTSMVSILYYGYF). The Extracellular segment spans residues 175-176 (EK). Residues 177–197 (FSLFCLFALITVSFGIACSIV) form a helical membrane-spanning segment. Residues 198–212 (SLKDKFRKREWRPYR) lie on the Cytoplasmic side of the membrane. Residues 213–233 (AGLFVCFGLSSIIPIFSGLYC) form a helical membrane-spanning segment. Residues 234-242 (YSFSEIWTQ) lie on the Extracellular side of the membrane. Residues 243 to 263 (IQLFWVLLGGVLYIIGAVLYG) traverse the membrane as a helical segment. Over 264-276 (MRFPEKICPGKFD) the chain is Cytoplasmic. A helical membrane pass occupies residues 277–297 (IWGHSHQLFHFLVVIAALCHL). Topologically, residues 298-317 (RGLLNSYELVHIKMENGIVS) are extracellular.

The protein belongs to the ADIPOR family.

It is found in the membrane. Functionally, probable receptor, which is involved in metabolic pathways that regulate lipid metabolism such as fatty acid oxidation. In Saccharomyces cerevisiae (strain ATCC 204508 / S288c) (Baker's yeast), this protein is ADIPOR-like receptor IZH2 (IZH2).